Reading from the N-terminus, the 278-residue chain is MRLGKHVSIAGGLYKATDRATKIGCNALQIFVKNPRGWKIKEVSDSEIKKLKDNIKKENMYPLVVHSSYLINMATPRDELWEKSVNSLKKEYKRTELINADYFVVHPGSHTGKGLHFGINRIIEAINSVFGEVKNGPQLLLENVAGAGSSIGSNFTELRDIINKVDDYARIGVCLDTCHAFAAGYDLRYEDGLEELLNDFDKIIGLDLLKVIHLNDSKYGLASNKDEHAHIGEGEIGEKGISNIINHPLLKDKPFILETPKFSGRDKDVELVNLLRRD.

Zn(2+) is bound by residues His66, His106, Glu142, Asp176, His179, His213, Asp226, His228, and Glu258.

It belongs to the AP endonuclease 2 family. Zn(2+) serves as cofactor.

The catalysed reaction is Endonucleolytic cleavage to 5'-phosphooligonucleotide end-products.. Functionally, endonuclease IV plays a role in DNA repair. It cleaves phosphodiester bonds at apurinic or apyrimidinic (AP) sites, generating a 3'-hydroxyl group and a 5'-terminal sugar phosphate. This is Probable endonuclease 4 from Halothermothrix orenii (strain H 168 / OCM 544 / DSM 9562).